The chain runs to 233 residues: Orotidine 5'-phosphate decarboxylase (233 aa).

Substrate contacts are provided by residues aspartate 13, lysine 35, 62-71 (DLKFHDIPNT), threonine 122, arginine 182, glutamine 191, glycine 211, and arginine 212. The active-site Proton donor is the lysine 64.

Belongs to the OMP decarboxylase family. Type 1 subfamily. As to quaternary structure, homodimer.

It catalyses the reaction orotidine 5'-phosphate + H(+) = UMP + CO2. It participates in pyrimidine metabolism; UMP biosynthesis via de novo pathway; UMP from orotate: step 2/2. In terms of biological role, catalyzes the decarboxylation of orotidine 5'-monophosphate (OMP) to uridine 5'-monophosphate (UMP). This chain is Orotidine 5'-phosphate decarboxylase, found in Pseudomonas putida (strain ATCC 700007 / DSM 6899 / JCM 31910 / BCRC 17059 / LMG 24140 / F1).